We begin with the raw amino-acid sequence, 446 residues long: Light-independent protochlorophyllide reductase subunit N (446 aa).

Residues Cys22, Cys47, and Cys107 each contribute to the [4Fe-4S] cluster site.

This sequence belongs to the BchN/ChlN family. As to quaternary structure, protochlorophyllide reductase is composed of three subunits; ChlL, ChlN and ChlB. Forms a heterotetramer of two ChlB and two ChlN subunits. It depends on [4Fe-4S] cluster as a cofactor.

The protein localises to the plastid. The protein resides in the chloroplast. The enzyme catalyses chlorophyllide a + oxidized 2[4Fe-4S]-[ferredoxin] + 2 ADP + 2 phosphate = protochlorophyllide a + reduced 2[4Fe-4S]-[ferredoxin] + 2 ATP + 2 H2O. It functions in the pathway porphyrin-containing compound metabolism; chlorophyll biosynthesis (light-independent). In terms of biological role, component of the dark-operative protochlorophyllide reductase (DPOR) that uses Mg-ATP and reduced ferredoxin to reduce ring D of protochlorophyllide (Pchlide) to form chlorophyllide a (Chlide). This reaction is light-independent. The NB-protein (ChlN-ChlB) is the catalytic component of the complex. The chain is Light-independent protochlorophyllide reductase subunit N from Mesostigma viride (Green alga).